The sequence spans 280 residues: Fe-S cluster assembly protein DRE2 (280 aa).

Residues 1–121 (MSNLLVFDNS…TTLLKKSGGG (121 aa)) form an N-terminal SAM-like domain region. Positions 122–176 (PKKFAFKRASPATAAPSTNGTNPAATVNLNSVVTLSMDDDDLMDEDDLMEDDTNL) are linker. Positions 186, 198, 201, and 203 each coordinate [2Fe-2S] cluster. The segment at 186-203 (CDPGPGKKRRKACKDCTC) is fe-S binding site A. [4Fe-4S] cluster-binding residues include Cys-244, Cys-247, Cys-255, and Cys-258. Short sequence motifs (cx2C motif) lie at residues 244-247 (CGSC) and 255-258 (CDGC). The fe-S binding site B stretch occupies residues 244–258 (CGSCALGDAFRCDGC).

It belongs to the anamorsin family. Monomer. Interacts with TAH18. Interacts with MIA40. [2Fe-2S] cluster serves as cofactor. It depends on [4Fe-4S] cluster as a cofactor.

The protein localises to the cytoplasm. The protein resides in the mitochondrion intermembrane space. Its function is as follows. Component of the cytosolic iron-sulfur (Fe-S) protein assembly (CIA) machinery required for the maturation of extramitochondrial Fe-S proteins. Part of an electron transfer chain functioning in an early step of cytosolic Fe-S biogenesis, facilitating the de novo assembly of a [4Fe-4S] cluster on the scaffold complex CFD1-NBP35. Electrons are transferred to DRE2 from NADPH via the FAD- and FMN-containing protein TAH18. TAH18-DRE2 are also required for the assembly of the diferric tyrosyl radical cofactor of ribonucleotide reductase (RNR), probably by providing electrons for reduction during radical cofactor maturation in the catalytic small subunit RNR2. This Yarrowia lipolytica (strain CLIB 122 / E 150) (Yeast) protein is Fe-S cluster assembly protein DRE2.